A 433-amino-acid chain; its full sequence is Type I acyl-CoA thioesterase mpaH (433 aa).

Residues 58 to 246 (HGVGLPKELY…VKARFDAAAD (189 aa)) are abhydrolase domain. Residue Val60 coordinates substrate. Ser139 serves as the catalytic Nucleophile. Phe140 serves as a coordination point for substrate. Active-site residues include Asp163 and His365.

It belongs to the AB hydrolase superfamily. MpaH hydrolase family. Homodimer.

Its subcellular location is the peroxisome matrix. It carries out the reaction mycophenolyl-CoA + H2O = mycophenolate + CoA + H(+). The protein operates within secondary metabolite biosynthesis; terpenoid biosynthesis. Its function is as follows. Type I acyl-CoA thioesterase; part of the gene cluster that mediates the biosynthesis of mycophenolic acid (MPA), the first isolated antibiotic natural product in the world obtained from a culture of Penicillium brevicompactum in 1893. MpaH acts as a peroxisomal acyl-CoA hydrolase that converts MPA-CoA into the final product MPA. The first step of the pathway is the synthesis of 5-methylorsellinic acid (5MOA) by the cytosolic polyketide synthase mpaC. 5MOA is then converted to the phthalide compound 5,7-dihydroxy-4,6-dimethylphthalide (DHMP) by the endoplasmic reticulum-bound cytochrome P450 monooxygenase mpaDE. MpaDE first catalyzes hydroxylation of 5-MOA to 4,6-dihydroxy-2-(hydroxymethyl)-3-methylbenzoic acid (DHMB). MpaDE then acts as a lactone synthase that catalyzes the ring closure to convert DHMB into DHMP. The next step is the prenylation of DHMP by the Golgi apparatus-associated prenyltransferase mpaA to yield farnesyl-DHMP (FDHMP). The ER-bound oxygenase mpaB then mediates the oxidative cleavage the C19-C20 double bond in FDHMP to yield FDHMP-3C via a mycophenolic aldehyde intermediate. The O-methyltransferase mpaG catalyzes the methylation of FDHMP-3C to yield MFDHMP-3C. After the cytosolic methylation of FDHMP-3C, MFDHMP-3C enters into peroxisomes probably via free diffusion due to its low molecular weight. Upon a peroxisomal CoA ligation reaction, catalyzed by a beta-oxidation component enzyme acyl-CoA ligase ACL891, MFDHMP-3C-CoA would then be restricted to peroxisomes for the following beta-oxidation pathway steps. The peroxisomal beta-oxidation machinery than converts MFDHMP-3C-CoA into MPA_CoA, via a beta-oxidation chain-shortening process. Finally mpaH acts as a peroxisomal acyl-CoA hydrolase with high substrate specificity toward MPA-CoA to release the final product MPA. This chain is Type I acyl-CoA thioesterase mpaH, found in Penicillium roqueforti (strain FM164).